Consider the following 197-residue polypeptide: LexA repressor (197 aa).

The H-T-H motif DNA-binding region spans 28 to 47; it reads VREIARRFRITPRGALLHLI. Residues S119 and K156 each act as for autocatalytic cleavage activity in the active site.

Belongs to the peptidase S24 family. Homodimer.

It carries out the reaction Hydrolysis of Ala-|-Gly bond in repressor LexA.. In terms of biological role, represses a number of genes involved in the response to DNA damage (SOS response), including recA and lexA. In the presence of single-stranded DNA, RecA interacts with LexA causing an autocatalytic cleavage which disrupts the DNA-binding part of LexA, leading to derepression of the SOS regulon and eventually DNA repair. The protein is LexA repressor of Thermotoga maritima (strain ATCC 43589 / DSM 3109 / JCM 10099 / NBRC 100826 / MSB8).